The sequence spans 116 residues: MSIETFTPTPLLFTPGAANKVKTLIDEEGNPRLKLRVFVTGGGCSGFQYGFTFDEDIADDDTVIERDGVGLVVDPMSFQYLAGSEVDYQEGLEGSRFVIKNPNAATTCGCGQSFSI.

Iron-sulfur cluster-binding residues include Cys-44, Cys-108, and Cys-110.

The protein belongs to the HesB/IscA family. Homodimer. It depends on iron-sulfur cluster as a cofactor.

Functionally, required for insertion of 4Fe-4S clusters for at least IspG. The polypeptide is Iron-sulfur cluster insertion protein ErpA (Pseudomonas aeruginosa (strain LESB58)).